The primary structure comprises 121 residues: Small ribosomal subunit protein uS13 (121 aa).

Positions 95–121 are disordered; it reads GLPVRGQKTKTNARTRKGKRKTVGAKS.

The protein belongs to the universal ribosomal protein uS13 family. Part of the 30S ribosomal subunit. Forms a loose heterodimer with protein S19. Forms two bridges to the 50S subunit in the 70S ribosome.

In terms of biological role, located at the top of the head of the 30S subunit, it contacts several helices of the 16S rRNA. In the 70S ribosome it contacts the 23S rRNA (bridge B1a) and protein L5 of the 50S subunit (bridge B1b), connecting the 2 subunits; these bridges are implicated in subunit movement. Contacts the tRNAs in the A and P-sites. The sequence is that of Small ribosomal subunit protein uS13 from Campylobacter jejuni subsp. jejuni serotype O:6 (strain 81116 / NCTC 11828).